The primary structure comprises 441 residues: MDMEVKTMPGKISIPRRFIFSEGKAIEHPDYPHYSNLLQKMNMPSVKGLEDRHNCVRFEKKCNPTFLKFHPYPPSVLPDYHLHYPYPPPYGRAYPLAPLRDDVPLGDPCSGFMSPGGDANLKPNIGRAIPNLVSFHDVKPQNRVPRPDKGFQTTIKRQTILAEELKQDRRWNSRKVPDISIKAKLGGWTSPMKVVPVPVHEHEVGTLSRIYTFDEEAISTDDSEPLVQLDKKYNIKDSFYKSSTQKAYEDVPWDKMLPPKLDPEETTVEKAADHISQCFSLKRYERLPAITQMVGGLWDRFQTRLFSAPAKPINFVSPSTRSKYIPLYTGHVQSTDADNVDNPYGDIKSVASPRHSKLQYTNSSRSANIPGYTGKVHFTATHPTNSNIPSREPSADSEMNRLLLQEMRVDRFRHQGPMSQMVTTVKPYNPFNKKEKETLEY.

As to expression, testis specific. Expressed at the spermatid stage.

Essential for normal spermatogenesis. The sequence is that of Protein SPMIP7 (Spmip7) from Mus musculus (Mouse).